The following is an 82-amino-acid chain: Sulfur carrier protein TusA (82 aa).

The Cysteine persulfide intermediate role is filled by Cys-19.

Belongs to the sulfur carrier protein TusA family.

The protein resides in the cytoplasm. Its function is as follows. Sulfur carrier protein which probably makes part of a sulfur-relay system. This chain is Sulfur carrier protein TusA, found in Photobacterium profundum (strain SS9).